Reading from the N-terminus, the 565-residue chain is CTP synthase (565 aa).

The segment at 1–272 (MARPKNVKHI…DLRVMKKLGL (272 aa)) is amidoligase domain. Serine 18 is a CTP binding site. Position 18 (serine 18) interacts with UTP. 19–24 (SLGKGI) lines the ATP pocket. Residue tyrosine 59 coordinates L-glutamine. ATP is bound at residue aspartate 76. Mg(2+)-binding residues include aspartate 76 and glutamate 146. Residues 153 to 155 (DIE), 193 to 198 (KTKPTQ), and lysine 229 each bind CTP. UTP contacts are provided by residues 193-198 (KTKPTQ) and lysine 229. The region spanning 299 to 543 (TIGVCGKYTE…VQAAKEFAMG (245 aa)) is the Glutamine amidotransferase type-1 domain. Residue glycine 363 coordinates L-glutamine. Residue cysteine 390 is the Nucleophile; for glutamine hydrolysis of the active site. L-glutamine-binding positions include 391-394 (LGMQ), glutamate 414, and arginine 471. Residues histidine 516 and glutamate 518 contribute to the active site.

The protein belongs to the CTP synthase family. As to quaternary structure, homotetramer.

The enzyme catalyses UTP + L-glutamine + ATP + H2O = CTP + L-glutamate + ADP + phosphate + 2 H(+). It catalyses the reaction L-glutamine + H2O = L-glutamate + NH4(+). The catalysed reaction is UTP + NH4(+) + ATP = CTP + ADP + phosphate + 2 H(+). It participates in pyrimidine metabolism; CTP biosynthesis via de novo pathway; CTP from UDP: step 2/2. Its activity is regulated as follows. Allosterically activated by GTP, when glutamine is the substrate; GTP has no effect on the reaction when ammonia is the substrate. The allosteric effector GTP functions by stabilizing the protein conformation that binds the tetrahedral intermediate(s) formed during glutamine hydrolysis. Inhibited by the product CTP, via allosteric rather than competitive inhibition. Catalyzes the ATP-dependent amination of UTP to CTP with either L-glutamine or ammonia as the source of nitrogen. Regulates intracellular CTP levels through interactions with the four ribonucleotide triphosphates. This chain is CTP synthase, found in Chlorobaculum parvum (strain DSM 263 / NCIMB 8327) (Chlorobium vibrioforme subsp. thiosulfatophilum).